The primary structure comprises 449 residues: Cyclin-B1-5 (449 aa).

2 disordered regions span residues 1-37 (MATR…AGRP) and 98-147 (PARK…GGSA). Composition is skewed to low complexity over residues 8–37 (AAAA…AGRP) and 136–147 (SEGAGSSSGGSA).

This sequence belongs to the cyclin family. Cyclin AB subfamily.

The protein is Cyclin-B1-5 (CYCB1-5) of Oryza sativa subsp. japonica (Rice).